Consider the following 305-residue polypeptide: Oxygen-dependent coproporphyrinogen-III oxidase (305 aa).

Residue serine 93 participates in substrate binding. Positions 97 and 107 each coordinate a divalent metal cation. Histidine 107 functions as the Proton donor in the catalytic mechanism. Residue 109 to 111 (NVR) coordinates substrate. A divalent metal cation-binding residues include histidine 146 and histidine 176. The tract at residues 241–276 (YVEFNLVYDRGTLFGLQSGGRTESILMSLPPQVRWG) is important for dimerization. 259 to 261 (GGR) provides a ligand contact to substrate.

It belongs to the aerobic coproporphyrinogen-III oxidase family. Homodimer. The cofactor is a divalent metal cation.

Its subcellular location is the cytoplasm. The catalysed reaction is coproporphyrinogen III + O2 + 2 H(+) = protoporphyrinogen IX + 2 CO2 + 2 H2O. It functions in the pathway porphyrin-containing compound metabolism; protoporphyrin-IX biosynthesis; protoporphyrinogen-IX from coproporphyrinogen-III (O2 route): step 1/1. Functionally, involved in the heme biosynthesis. Catalyzes the aerobic oxidative decarboxylation of propionate groups of rings A and B of coproporphyrinogen-III to yield the vinyl groups in protoporphyrinogen-IX. The chain is Oxygen-dependent coproporphyrinogen-III oxidase from Pseudomonas fluorescens (strain ATCC BAA-477 / NRRL B-23932 / Pf-5).